The following is a 189-amino-acid chain: Peptidyl-tRNA hydrolase (189 aa).

Tyr-16 serves as a coordination point for tRNA. Residue His-21 is the Proton acceptor of the active site. Phe-67, Asn-69, and Asn-115 together coordinate tRNA.

It belongs to the PTH family. In terms of assembly, monomer.

The protein localises to the cytoplasm. The catalysed reaction is an N-acyl-L-alpha-aminoacyl-tRNA + H2O = an N-acyl-L-amino acid + a tRNA + H(+). In terms of biological role, hydrolyzes ribosome-free peptidyl-tRNAs (with 1 or more amino acids incorporated), which drop off the ribosome during protein synthesis, or as a result of ribosome stalling. Its function is as follows. Catalyzes the release of premature peptidyl moieties from peptidyl-tRNA molecules trapped in stalled 50S ribosomal subunits, and thus maintains levels of free tRNAs and 50S ribosomes. This is Peptidyl-tRNA hydrolase from Legionella pneumophila (strain Paris).